The sequence spans 129 residues: Small ribosomal subunit protein uS11 (129 aa).

It belongs to the universal ribosomal protein uS11 family. Part of the 30S ribosomal subunit. Interacts with proteins S7 and S18. Binds to IF-3.

Located on the platform of the 30S subunit, it bridges several disparate RNA helices of the 16S rRNA. Forms part of the Shine-Dalgarno cleft in the 70S ribosome. The polypeptide is Small ribosomal subunit protein uS11 (Mesorhizobium japonicum (strain LMG 29417 / CECT 9101 / MAFF 303099) (Mesorhizobium loti (strain MAFF 303099))).